We begin with the raw amino-acid sequence, 577 residues long: Calcium-dependent protein kinase 22 (577 aa).

A lipid anchor (N-myristoyl glycine) is attached at Gly2. A Protein kinase domain is found at 105–368 (YRLGAELGRG…AKEVLEHPWL (264 aa)). Residues 111 to 119 (LGRGEFGVT) and Lys134 contribute to the ATP site. The active-site Proton acceptor is the Asp234. Positions 374–404 (APNVSLGEIVRSRLMQFSAMNKFKKKALGVV) are autoinhibitory domain. EF-hand domains are found at residues 411-446 (EEMD…NGHP), 447-482 (VPET…IKKM), 483-518 (SNEE…ELGP), and 520-553 (EQVV…GSDW). Asp424, Asp426, Ser428, Asn430, Asp435, Asp460, Asp462, Asn464, Thr466, Glu471, Asp496, Asp498, Asn500, Glu507, Asp531, Asp533, Asp535, Arg537, and Glu542 together coordinate Ca(2+).

Belongs to the protein kinase superfamily. Ser/Thr protein kinase family. CDPK subfamily.

It is found in the membrane. The catalysed reaction is L-seryl-[protein] + ATP = O-phospho-L-seryl-[protein] + ADP + H(+). The enzyme catalyses L-threonyl-[protein] + ATP = O-phospho-L-threonyl-[protein] + ADP + H(+). With respect to regulation, activated by calcium. Autophosphorylation may play an important role in the regulation of the kinase activity. May play a role in signal transduction pathways that involve calcium as a second messenger. In Oryza sativa subsp. japonica (Rice), this protein is Calcium-dependent protein kinase 22.